Reading from the N-terminus, the 466-residue chain is Delta-1 crystallin (466 aa).

This sequence belongs to the lyase 1 family. Argininosuccinate lyase subfamily. Homotetramer. Eye lens.

Its function is as follows. Delta crystallin, the principal crystallin in embryonic lens, is found only in birds and reptiles. Despite possessing the necessary catalytic residues, this protein does not function as an enzymatically active argininosuccinate lyase. The sequence is that of Delta-1 crystallin (ASL1) from Anas platyrhynchos (Mallard).